The following is a 363-amino-acid chain: 4-hydroxy-2-oxovalerate aldolase 1 (363 aa).

Residues 13 to 265 (VRMTDTSLRD…KTGIDFFDIA (253 aa)) form the Pyruvate carboxyltransferase domain. 21-22 (RD) provides a ligand contact to substrate. Asp22 contacts Mn(2+). His25 (proton acceptor) is an active-site residue. Residues Ser175 and His204 each coordinate substrate. Mn(2+)-binding residues include His204 and His206. Tyr295 contributes to the substrate binding site.

This sequence belongs to the 4-hydroxy-2-oxovalerate aldolase family.

It catalyses the reaction (S)-4-hydroxy-2-oxopentanoate = acetaldehyde + pyruvate. This is 4-hydroxy-2-oxovalerate aldolase 1 from Mycobacterium sp. (strain JLS).